The chain runs to 363 residues: Phospho-N-acetylmuramoyl-pentapeptide-transferase (363 aa).

Transmembrane regions (helical) follow at residues 3-23, 48-68, 83-103, 121-141, 159-179, 192-212, 234-254, 261-281, 286-306, and 340-360; these read QILF…PLLI, GTPT…YFLA, PTFS…VGFL, AKMI…LQFA, FGWT…ILAM, LATG…VWQF, PLDL…FLWW, IFMG…LAIC, LLMA…VIQV, and FWII…AGWA.

The protein belongs to the glycosyltransferase 4 family. MraY subfamily. It depends on Mg(2+) as a cofactor.

The protein localises to the cell membrane. The enzyme catalyses UDP-N-acetyl-alpha-D-muramoyl-L-alanyl-gamma-D-glutamyl-meso-2,6-diaminopimeloyl-D-alanyl-D-alanine + di-trans,octa-cis-undecaprenyl phosphate = di-trans,octa-cis-undecaprenyl diphospho-N-acetyl-alpha-D-muramoyl-L-alanyl-D-glutamyl-meso-2,6-diaminopimeloyl-D-alanyl-D-alanine + UMP. The protein operates within cell wall biogenesis; peptidoglycan biosynthesis. Its function is as follows. Catalyzes the initial step of the lipid cycle reactions in the biosynthesis of the cell wall peptidoglycan: transfers peptidoglycan precursor phospho-MurNAc-pentapeptide from UDP-MurNAc-pentapeptide onto the lipid carrier undecaprenyl phosphate, yielding undecaprenyl-pyrophosphoryl-MurNAc-pentapeptide, known as lipid I. This chain is Phospho-N-acetylmuramoyl-pentapeptide-transferase, found in Streptomyces coelicolor (strain ATCC BAA-471 / A3(2) / M145).